The sequence spans 375 residues: Transaldolase (375 aa).

Residue Lys-145 is the Schiff-base intermediate with substrate of the active site.

It belongs to the transaldolase family. Type 2 subfamily.

The protein resides in the cytoplasm. The catalysed reaction is D-sedoheptulose 7-phosphate + D-glyceraldehyde 3-phosphate = D-erythrose 4-phosphate + beta-D-fructose 6-phosphate. It participates in carbohydrate degradation; pentose phosphate pathway; D-glyceraldehyde 3-phosphate and beta-D-fructose 6-phosphate from D-ribose 5-phosphate and D-xylulose 5-phosphate (non-oxidative stage): step 2/3. Its function is as follows. Transaldolase is important for the balance of metabolites in the pentose-phosphate pathway. The chain is Transaldolase from Mycobacterium leprae (strain Br4923).